Consider the following 989-residue polypeptide: Cellulose synthase A catalytic subunit 4 [UDP-forming] (989 aa).

Residues 1–184 (MMESGVPPCA…SRIIPISKNK (184 aa)) lie on the Cytoplasmic side of the membrane. Residues C9, C12, C20, C23, C28, C31, C43, and C46 each coordinate Zn(2+). The RING-type; degenerate zinc-finger motif lies at 9 to 47 (CAACGDDAHAACRACSYALCKACLDEDAAEGRTTCARCG). The segment covering 138 to 149 (KKEKKASAKKAA) has biased composition (basic residues). Positions 138–158 (KKEKKASAKKAAAKAQAPPVE) are disordered. A helical transmembrane segment spans residues 185-205 (LTPYRAVIIMRLVVLGLFFHY). The Extracellular segment spans residues 206–213 (RITNPVYS). Residues 214–234 (AFGLWMTSVICEIWFGFSWIL) traverse the membrane as a helical segment. Residues 235–772 (DQFPKWCPIN…INTIVYPFTS (538 aa)) are Cytoplasmic-facing. Positions 272, 278, 279, and 308 each coordinate UDP-alpha-D-glucose. Residue D308 is part of the active site. The stretch at 362–389 (VKERRAMKRDYEEYKVRINALVAKAQKT) forms a coiled coil. Residue K449 participates in UDP-alpha-D-glucose binding. Positions 450 and 474 each coordinate Mn(2+). The active site involves D688. The helical transmembrane segment at 773 to 793 (LPLIAYCCLPAICLLTGKFII) threads the bilayer. The Extracellular portion of the chain corresponds to 794 to 798 (PTLSN). The chain crosses the membrane as a helical span at residues 799-819 (AATIWFLGLFISIIVTSVLEL). Residues 820–835 (RWSGIGIEDWWRNEQF) are Cytoplasmic-facing. The chain crosses the membrane as a helical span at residues 836 to 856 (WVIGGVSAHLFAVFQGILKMI). The Extracellular segment spans residues 857 to 884 (AGLDTNFTVTAKATDDTEFGELYVFKWT). A glycan (N-linked (GlcNAc...) asparagine) is linked at N862. The helical transmembrane segment at 885-905 (TVLIPPTSILVLNLVGVVAGF) threads the bilayer. The Cytoplasmic segment spans residues 906 to 916 (SDALNSGYESW). The helical transmembrane segment at 917–937 (GPLFGKVFFAMWVIMHLYPFL) threads the bilayer. Topologically, residues 938-946 (KGLMGRQNR) are extracellular. A helical transmembrane segment spans residues 947 to 967 (TPTIVVLWSVLLASVFSLLWV). Residues 968-989 (KIDPFIGSSETTTTNSCANFDC) are Cytoplasmic-facing.

It belongs to the glycosyltransferase 2 family. Plant cellulose synthase subfamily. Mn(2+) is required as a cofactor. Requires Zn(2+) as cofactor.

It is found in the cell membrane. It carries out the reaction [(1-&gt;4)-beta-D-glucosyl](n) + UDP-alpha-D-glucose = [(1-&gt;4)-beta-D-glucosyl](n+1) + UDP + H(+). It functions in the pathway glycan metabolism; plant cellulose biosynthesis. Its function is as follows. Catalytic subunit of cellulose synthase terminal complexes ('rosettes'), required for beta-1,4-glucan microfibril crystallization, a major mechanism of the cell wall formation. Involved in the secondary cell wall formation. The protein is Cellulose synthase A catalytic subunit 4 [UDP-forming] (CESA4) of Oryza sativa subsp. indica (Rice).